The primary structure comprises 192 residues: MSSSSETCFVHPNAIVETKKIGNNTRIWAFVHILPQAMIGDNCNICDHCFIENDVFIGNNVTVKSGIYIWDGVYIEDNVFLGPNVVFTNDVFPRSKVYPESFGRTIVKKGASIGANSVIVAGNIIGEYAMVGAGSVVTRDIPDYALAYGNPARIKGYVCQCTSKLKFIDNQAVCQCGKRYKYADGIVSQLII.

This sequence belongs to the transferase hexapeptide repeat family.

The catalysed reaction is dTDP-3-amino-3,6-dideoxy-alpha-D-galactopyranose + acetyl-CoA = dTDP-3-acetamido-3,6-dideoxy-alpha-D-galactopyranose + CoA + H(+). Functionally, catalyzes the transfer of an acetyl group to dTDP-D-Fucp3N to form dTDP-D-Fucp3NAc in the biosynthesis of dTDP-3-acetamido-3,6-dideoxy-alpha-D-galactose, a glycan chain of the S-layer. This Aneurinibacillus thermoaerophilus protein is dTDP-3-amino-3,6-dideoxy-alpha-D-galactopyranose 3-N-acetyltransferase (fdtC).